Reading from the N-terminus, the 181-residue chain is MRILGIDPGLRTTGFGVIEKHGNKLAYVASGTIKSDGNSTLPERLKTLYDGISEVSRTYAPDCAAIEKVFVNVNPQSTLLLGQARGAAICGLVGYGLPVFEYTALQLKVAVVGYGRANKAQVQEMVTRLLMLPGQPGSDAADALGVAICHANGSDTLGTLSGLAPDLVRKGMRVRRGRLVG.

Active-site residues include Asp-7, Glu-67, and Asp-139. Residues Asp-7, Glu-67, and Asp-139 each coordinate Mg(2+).

It belongs to the RuvC family. As to quaternary structure, homodimer which binds Holliday junction (HJ) DNA. The HJ becomes 2-fold symmetrical on binding to RuvC with unstacked arms; it has a different conformation from HJ DNA in complex with RuvA. In the full resolvosome a probable DNA-RuvA(4)-RuvB(12)-RuvC(2) complex forms which resolves the HJ. Mg(2+) is required as a cofactor.

It localises to the cytoplasm. The enzyme catalyses Endonucleolytic cleavage at a junction such as a reciprocal single-stranded crossover between two homologous DNA duplexes (Holliday junction).. In terms of biological role, the RuvA-RuvB-RuvC complex processes Holliday junction (HJ) DNA during genetic recombination and DNA repair. Endonuclease that resolves HJ intermediates. Cleaves cruciform DNA by making single-stranded nicks across the HJ at symmetrical positions within the homologous arms, yielding a 5'-phosphate and a 3'-hydroxyl group; requires a central core of homology in the junction. The consensus cleavage sequence is 5'-(A/T)TT(C/G)-3'. Cleavage occurs on the 3'-side of the TT dinucleotide at the point of strand exchange. HJ branch migration catalyzed by RuvA-RuvB allows RuvC to scan DNA until it finds its consensus sequence, where it cleaves and resolves the cruciform DNA. The chain is Crossover junction endodeoxyribonuclease RuvC from Cupriavidus necator (strain ATCC 17699 / DSM 428 / KCTC 22496 / NCIMB 10442 / H16 / Stanier 337) (Ralstonia eutropha).